A 527-amino-acid polypeptide reads, in one-letter code: Amine oxidase [flavin-containing] A (527 aa).

N-acetylmethionine is present on M1. Residues 1–497 (MASREKTSIE…HTFWERNLPS (497 aa)) are Cytoplasmic-facing. S383 is modified (phosphoserine). C406 is subject to S-8alpha-FAD cysteine. The helical; Anchor for type IV membrane protein transmembrane segment at 498–518 (VTGLLKLIGFTTSVTALWIVA) threads the bilayer. Over 519–527 (YKFRLLRRS) the chain is Mitochondrial intermembrane. The tract at residues 520-522 (KFR) is interaction with membrane phospholipid headgroups.

Belongs to the flavin monoamine oxidase family. Monomer, homo- or heterodimer (containing two subunits of similar size). Each subunit contains a covalently bound flavin. Enzymatically active as monomer. It depends on FAD as a cofactor.

The protein localises to the mitochondrion outer membrane. It carries out the reaction a secondary aliphatic amine + O2 + H2O = a primary amine + an aldehyde + H2O2. The enzyme catalyses a primary methyl amine + O2 + H2O = an aldehyde + H2O2 + NH4(+). It catalyses the reaction (R)-adrenaline + O2 + H2O = (R)-3,4-dihydroxymandelaldehyde + methylamine + H2O2. The catalysed reaction is dopamine + O2 + H2O = 3,4-dihydroxyphenylacetaldehyde + H2O2 + NH4(+). It carries out the reaction tyramine + O2 + H2O = (4-hydroxyphenyl)acetaldehyde + H2O2 + NH4(+). The enzyme catalyses (R)-noradrenaline + O2 + H2O = (R)-3,4-dihydroxymandelaldehyde + H2O2 + NH4(+). It catalyses the reaction serotonin + O2 + H2O = (5-hydroxyindol-3-yl)acetaldehyde + H2O2 + NH4(+). The catalysed reaction is kynuramine + O2 + H2O = 3-(2-aminophenyl)-3-oxopropanal + H2O2 + NH4(+). It carries out the reaction tryptamine + O2 + H2O = indole-3-acetaldehyde + H2O2 + NH4(+). The enzyme catalyses 2-phenylethylamine + O2 + H2O = 2-phenylacetaldehyde + H2O2 + NH4(+). Functionally, catalyzes the oxidative deamination of primary and some secondary amine such as neurotransmitters, with concomitant reduction of oxygen to hydrogen peroxide and has important functions in the metabolism of neuroactive and vasoactive amines in the central nervous system and peripheral tissues. Preferentially oxidizes serotonin. Also catalyzes the oxidative deamination of kynuramine to 3-(2-aminophenyl)-3-oxopropanal that can spontaneously condense to 4-hydroxyquinoline. The chain is Amine oxidase [flavin-containing] A from Canis lupus familiaris (Dog).